The sequence spans 424 residues: Glutamate-1-semialdehyde 2,1-aminomutase (424 aa).

Lys-266 carries the post-translational modification N6-(pyridoxal phosphate)lysine.

Belongs to the class-III pyridoxal-phosphate-dependent aminotransferase family. HemL subfamily. In terms of assembly, homodimer. It depends on pyridoxal 5'-phosphate as a cofactor.

It localises to the cytoplasm. The catalysed reaction is (S)-4-amino-5-oxopentanoate = 5-aminolevulinate. Its pathway is porphyrin-containing compound metabolism; protoporphyrin-IX biosynthesis; 5-aminolevulinate from L-glutamyl-tRNA(Glu): step 2/2. In Thermus thermophilus (strain ATCC 27634 / DSM 579 / HB8), this protein is Glutamate-1-semialdehyde 2,1-aminomutase.